The primary structure comprises 881 residues: Disks large homolog 2 (881 aa).

2 disordered regions span residues H16–A41 and L63–R88. 3 PDZ domains span residues E155–R242, E250–T337, and K424–P505. Positions K539 to E609 constitute an SH3 domain. Residues A683–E866 enclose the Guanylate kinase-like domain. The segment at G709–D729 is disordered.

The protein belongs to the MAGUK family.

It localises to the cell membrane. Its subcellular location is the postsynaptic density. It is found in the synapse. The protein resides in the membrane. The protein localises to the cell projection. It localises to the axon. Its subcellular location is the perikaryon. Its function is as follows. May play a role in synapse assembly and function. This chain is Disks large homolog 2 (dlg2), found in Danio rerio (Zebrafish).